The primary structure comprises 102 residues: NADH-quinone oxidoreductase subunit K (102 aa).

3 helical membrane passes run 6 to 26 (MEHG…GLMV), 30 to 50 (ILFI…AFVV), and 62 to 82 (VMFI…LAIL).

This sequence belongs to the complex I subunit 4L family. NDH-1 is composed of 13 different subunits. Subunits NuoA, H, J, K, L, M, N constitute the membrane sector of the complex.

The protein localises to the cell inner membrane. It carries out the reaction a quinone + NADH + 5 H(+)(in) = a quinol + NAD(+) + 4 H(+)(out). In terms of biological role, NDH-1 shuttles electrons from NADH, via FMN and iron-sulfur (Fe-S) centers, to quinones in the respiratory chain. The immediate electron acceptor for the enzyme in this species is believed to be ubiquinone. Couples the redox reaction to proton translocation (for every two electrons transferred, four hydrogen ions are translocated across the cytoplasmic membrane), and thus conserves the redox energy in a proton gradient. The polypeptide is NADH-quinone oxidoreductase subunit K (Ectopseudomonas mendocina (strain ymp) (Pseudomonas mendocina)).